Reading from the N-terminus, the 498-residue chain is Fascin-3 (498 aa).

Belongs to the fascin family. In terms of tissue distribution, expressed in testis.

It localises to the cytoplasm. The protein localises to the cytoskeleton. Functionally, acts as an actin bundling protein. The sequence is that of Fascin-3 (FSCN3) from Homo sapiens (Human).